The chain runs to 191 residues: NAD(P)H-quinone oxidoreductase subunit L, chloroplastic (191 aa).

Residues 1-46 constitute a chloroplast transit peptide; the sequence is MSRCGSLGLYAPNALPSLSLKPRSVKSPFCITSHTKPNDTLLHNVN. A run of 3 helical transmembrane segments spans residues 61–81, 93–113, and 129–149; these read TILAAQLGAVLATIDHPALAI, VVLDIGIISVWYFLVMPPIIM, and YLQFMFVFMFFPGLLLWAPFL.

The protein belongs to the NDH complex subunit L family. In terms of assembly, part of the chloroplast NDH complex, composed of a mixture of chloroplast and nucleus encoded subunits. Component of the NDH subcomplex A, at least composed of ndhH, ndhI, ndhJ, ndhK, ndhL, ndhM, ndhN and ndhO.

It localises to the plastid. Its subcellular location is the chloroplast thylakoid membrane. It catalyses the reaction a plastoquinone + NADH + (n+1) H(+)(in) = a plastoquinol + NAD(+) + n H(+)(out). The catalysed reaction is a plastoquinone + NADPH + (n+1) H(+)(in) = a plastoquinol + NADP(+) + n H(+)(out). Functionally, NDH shuttles electrons from NAD(P)H:plastoquinone, via FMN and iron-sulfur (Fe-S) centers, to quinones in the photosynthetic chain and possibly in a chloroplast respiratory chain. The immediate electron acceptor for the enzyme in this species is believed to be plastoquinone. Couples the redox reaction to proton translocation, and thus conserves the redox energy in a proton gradient. The polypeptide is NAD(P)H-quinone oxidoreductase subunit L, chloroplastic (Arabidopsis thaliana (Mouse-ear cress)).